The following is a 94-amino-acid chain: Transcription factor PRE6 (94 aa).

The disordered stretch occupies residues 1 to 20 (MSSRRSSRSRQSGSSRISDD). The 55-residue stretch at 6 to 60 (SSRSRQSGSSRISDDQISDLVSKLQHLIPELRRRRSDKVSASKVLQETCNYIRNL) folds into the bHLH domain.

The protein belongs to the bHLH protein family. Interacts with HFR1.

The protein localises to the cytoplasm. It localises to the nucleus. Functionally, atypical and probable non DNA-binding bHLH transcription factor that regulates light-mediated responses in day light conditions by binding and inhibiting the activity of the bHLH transcription factor HFR1, a critical regulator of light signaling and shade avoidance. Forms non-functional heterodimers with HFR1, causing liberation and activation of PIF4 from the transcriptionally inactive HFR1-PIF4 complex. The polypeptide is Transcription factor PRE6 (PRE6) (Arabidopsis thaliana (Mouse-ear cress)).